The chain runs to 484 residues: MFHHADKGGKKSAFGHPVCGQIILSIILLRPPLLVTAFPVNTVEEQICKDPGFPEHGIRTPSIGKFFENSVARFSCADGFSLKGPAKIICTRFYNGSLGWKPSLKPVCLSEDCLPPFIEDADVTNRTYRPGDSLIISCHEGFQIRYPDTETMESVCQADGTWDNQPTCQGCLRPLIPPHSYMNISETKFSVPVGTVVHYQCFPGYKLEGPELLECMYNLIWSDTPPRCLDVEACSLPPMIEHGDYTCHPHPCDRYIHGTVVEYYCYPGYSLANDYKYITCQYGQWFPQMQLYCVKDETTWPGFQDSLLTTWKVVACTATSVLLALLLVITAKMFHYKCKSQQSPSDEPDESRDPNILVVDGVAVPLPSYEEAISGNYCQPPNDLPPDGLESAQHSEEQNPPSYPGHTGSQNSVPLDTGDVENCDSLSDTSECLQGLQPSSSHPGGLNMSEKTNAITSMEETASTSPSIDIADEIPLVEDGEEDC.

Residues 1-35 (MFHHADKGGKKSAFGHPVCGQIILSIILLRPPLLV) form the signal peptide. 4 consecutive Sushi domains span residues 46–110 (QICK…VCLS), 111–168 (EDCL…QPTC), 169–230 (QGCL…RCLD), and 232–295 (EACS…YCVK). 8 disulfide bridges follow: Cys-48/Cys-90, Cys-76/Cys-108, Cys-113/Cys-156, Cys-138/Cys-168, Cys-171/Cys-215, Cys-201/Cys-228, Cys-234/Cys-280, and Cys-265/Cys-293. N-linked (GlcNAc...) asparagine glycosylation is found at Asn-95 and Asn-125. N-linked (GlcNAc...) asparagine glycosylation is present at Asn-183. A helical membrane pass occupies residues 311 to 331 (WKVVACTATSVLLALLLVITA). Positions 374 to 484 (SGNYCQPPND…PLVEDGEEDC (111 aa)) are disordered. Polar residues-rich tracts occupy residues 424-442 (DSLSDTSECLQGLQPSSSH) and 449-467 (SEKTNAITSMEETASTSPS). Over residues 470 to 484 (IADEIPLVEDGEEDC) the composition is skewed to acidic residues.

The protein resides in the membrane. In Danio rerio (Zebrafish), this protein is Sushi domain-containing protein 4 (susd4).